The chain runs to 94 residues: Putative septation protein SpoVG (94 aa).

Belongs to the SpoVG family.

In terms of biological role, could be involved in septation. This is Putative septation protein SpoVG from Acholeplasma laidlawii (strain PG-8A).